The primary structure comprises 332 residues: 5-dehydro-2-deoxygluconokinase 2 (332 aa).

The protein belongs to the carbohydrate kinase PfkB family.

The enzyme catalyses 5-dehydro-2-deoxy-D-gluconate + ATP = 6-phospho-5-dehydro-2-deoxy-D-gluconate + ADP + H(+). It participates in polyol metabolism; myo-inositol degradation into acetyl-CoA; acetyl-CoA from myo-inositol: step 5/7. In terms of biological role, catalyzes the phosphorylation of 5-dehydro-2-deoxy-D-gluconate (2-deoxy-5-keto-D-gluconate or DKG) to 6-phospho-5-dehydro-2-deoxy-D-gluconate (DKGP). The chain is 5-dehydro-2-deoxygluconokinase 2 from Bacillus cereus (strain ZK / E33L).